A 192-amino-acid polypeptide reads, in one-letter code: Adenylate kinase (192 aa).

10-15 (GAGKGT) serves as a coordination point for ATP. Residues 30 to 59 (STGDMLREVIRRETEIGKKAKAMINAGTLV) form an NMP region. AMP is bound by residues T31, R36, 57 to 59 (TLV), 85 to 88 (GYPR), and Q92. The interval 126-142 (KRVQETIIAGGQVRSDD) is LID. R127 contributes to the ATP binding site. Residues R139 and R150 each contribute to the AMP site. I178 contributes to the ATP binding site.

This sequence belongs to the adenylate kinase family. In terms of assembly, monomer.

It is found in the cytoplasm. It carries out the reaction AMP + ATP = 2 ADP. It functions in the pathway purine metabolism; AMP biosynthesis via salvage pathway; AMP from ADP: step 1/1. Catalyzes the reversible transfer of the terminal phosphate group between ATP and AMP. Plays an important role in cellular energy homeostasis and in adenine nucleotide metabolism. In Bartonella henselae (strain ATCC 49882 / DSM 28221 / CCUG 30454 / Houston 1) (Rochalimaea henselae), this protein is Adenylate kinase.